The primary structure comprises 98 residues: MSCYDLCRPCGPTPLANSCNEPCVRQCQDSRVIIEPSPVVVTLPGPILSSFPQNTAVGSTTSAAVGSILSEEGVPINSGGFNLSGLGGHYYSRRCLPC.

Residue Ser-2 is modified to N-acetylserine.

It belongs to the avian keratin family. The avian keratins (F-ker, S-ker, C-ker and B-ker) are a complex mixture of very similar polypeptides.

The chain is Feather beta keratin from Cathartes aura (Turkey vulture).